Here is a 177-residue protein sequence, read N- to C-terminus: von Ebner gland protein 2 (177 aa).

The N-terminal stretch at 1-18 (MKALLLTFSLSLLAALQA) is a signal peptide. The cysteines at positions 80 and 172 are disulfide-linked.

The protein belongs to the calycin superfamily. Lipocalin family. As to quaternary structure, homodimer.

It localises to the secreted. Could play a role in taste reception. Could be necessary for the concentration and delivery of sapid molecules in the gustatory system. The sequence is that of von Ebner gland protein 2 (Vegp2) from Rattus norvegicus (Rat).